We begin with the raw amino-acid sequence, 251 residues long: Small ribosomal subunit protein uS2 (251 aa).

It belongs to the universal ribosomal protein uS2 family.

The chain is Small ribosomal subunit protein uS2 from Synechococcus elongatus (strain ATCC 33912 / PCC 7942 / FACHB-805) (Anacystis nidulans R2).